The primary structure comprises 328 residues: Nickel import system permease protein NikB (328 aa).

6 helical membrane-spanning segments follow: residues 11–31 (LMQM…LMKL), 104–124 (LLIS…LGII), 139–159 (VIST…LLFI), 170–190 (ILSQ…AYII), 229–249 (ILPI…GTVV), and 279–299 (VLFI…LTLL). Residues 100–297 (APITLLISFS…IINTIADLLT (198 aa)) enclose the ABC transmembrane type-1 domain.

The protein belongs to the binding-protein-dependent transport system permease family. OppBC subfamily. As to quaternary structure, the complex is composed of two ATP-binding proteins (NikD and NikE), two transmembrane proteins (NikB and NikC) and a solute-binding protein (NikA).

The protein localises to the cell membrane. Functionally, part of the ABC transporter complex NikABCDE (Opp2) involved in nickel import. Probably responsible for the translocation of the substrate across the membrane. The chain is Nickel import system permease protein NikB from Staphylococcus aureus (strain Mu50 / ATCC 700699).